A 196-amino-acid chain; its full sequence is Endoribonuclease YbeY (196 aa).

Zn(2+) contacts are provided by H120, H124, and H130.

Belongs to the endoribonuclease YbeY family. It depends on Zn(2+) as a cofactor.

The protein localises to the cytoplasm. Functionally, single strand-specific metallo-endoribonuclease involved in late-stage 70S ribosome quality control and in maturation of the 3' terminus of the 16S rRNA. The protein is Endoribonuclease YbeY of Corynebacterium glutamicum (strain ATCC 13032 / DSM 20300 / JCM 1318 / BCRC 11384 / CCUG 27702 / LMG 3730 / NBRC 12168 / NCIMB 10025 / NRRL B-2784 / 534).